Consider the following 317-residue polypeptide: MPVLGSQRRLLGSLNCTPPATFSLTLAPNRTGPQCLEVSIPDGLFLSLGLVSLVENVLVVAAIAKNRNLHSPMYYFICCLAVSDLLVSVSNVLETAVMLLLEAGALAARAAVVQQLDNVIDVLICGSMVSSLCFLGAIAMDRYISIFYALRYHSVVTLPRAWRIIAAIWVASILTSLLFITYYNHTVVLLCLVGFFIAMLALMAILYVHMLARACQHARDIARLQKRQHPIHQGFGLKGAATLTILLGVFFLCWGPFFLHLSLIVLCPQHPTCGCIFKNFNLFLALIICNAIVDPLIYAFRSQELRKTLQEVLQCSW.

The Extracellular segment spans residues 1–37 (MPVLGSQRRLLGSLNCTPPATFSLTLAPNRTGPQCLE). Asparagine 29 is a glycosylation site (N-linked (GlcNAc...) asparagine). The helical transmembrane segment at 38–63 (VSIPDGLFLSLGLVSLVENVLVVAAI) threads the bilayer. The Cytoplasmic segment spans residues 64 to 72 (AKNRNLHSP). Residues 73–93 (MYYFICCLAVSDLLVSVSNVL) form a helical membrane-spanning segment. Over 94–118 (ETAVMLLLEAGALAARAAVVQQLDN) the chain is Extracellular. A helical membrane pass occupies residues 119–140 (VIDVLICGSMVSSLCFLGAIAM). At 141–163 (DRYISIFYALRYHSVVTLPRAWR) the chain is on the cytoplasmic side. Residues 164–183 (IIAAIWVASILTSLLFITYY) form a helical membrane-spanning segment. The Extracellular portion of the chain corresponds to 184 to 191 (NHTVVLLC). Residues 192–211 (LVGFFIAMLALMAILYVHML) form a helical membrane-spanning segment. Over 212–240 (ARACQHARDIARLQKRQHPIHQGFGLKGA) the chain is Cytoplasmic. A helical transmembrane segment spans residues 241 to 266 (ATLTILLGVFFLCWGPFFLHLSLIVL). The Extracellular portion of the chain corresponds to 267 to 279 (CPQHPTCGCIFKN). A helical membrane pass occupies residues 280–300 (FNLFLALIICNAIVDPLIYAF). Over 301 to 317 (RSQELRKTLQEVLQCSW) the chain is Cytoplasmic. Cysteine 315 carries the S-palmitoyl cysteine lipid modification.

This sequence belongs to the G-protein coupled receptor 1 family. As to quaternary structure, interacts with MGRN1, but does not undergo MGRN1-mediated ubiquitination; this interaction competes with GNAS-binding and thus inhibits agonist-induced cAMP production. Interacts with OPN3; the interaction results in a decrease in MC1R-mediated cAMP signaling and ultimately a decrease in melanin production in melanocytes.

The protein localises to the cell membrane. In terms of biological role, receptor for MSH (alpha, beta and gamma) and ACTH. The activity of this receptor is mediated by G proteins which activate adenylate cyclase. Mediates melanogenesis, the production of eumelanin (black/brown) and phaeomelanin (red/yellow), via regulation of cAMP signaling in melanocytes. This Alces alces alces (European moose) protein is Melanocyte-stimulating hormone receptor (MC1R).